The chain runs to 1163 residues: Rho GTPase-activating protein 45 (1163 aa).

Positions 1-99 (MFSRKKRELM…KRPTSLSRHA (99 aa)) are disordered. A phosphoserine mark is found at serine 23 and serine 25. The segment covering 55–65 (LPKELPRKDGA) has biased composition (basic and acidic residues). A phosphoserine mark is found at serine 100, serine 120, and serine 126. Disordered stretches follow at residues 118–137 (HRSPLTAASPGELPTEGTGP), 262–282 (PPGDSSQSMESLYGSGSEGTP), and 454–475 (EEEQAGTAPGAGSTATKTLDKR). One can recognise an F-BAR domain in the interval 296 to 566 (EEVDVLLQRC…SSKLYDPGQQ (271 aa)). Positions 403-526 (EHEKRRKEIK…QIQEVIRQSD (124 aa)) form a coiled coil. The segment covering 458–470 (AGTAPGAGSTATK) has biased composition (low complexity). Phosphoserine is present on residues serine 596, serine 605, and serine 619. A disordered region spans residues 610–695 (DVAGPEAAGS…VDPEGGAGAS (86 aa)). The segment covering 633–644 (KGHRAGRGHQVH) has biased composition (basic residues). Phosphoserine is present on serine 646. Over residues 673 to 682 (TSSSGTMSST) the composition is skewed to low complexity. The segment at 729–774 (THRLRKLRTPAKCRECNSYVYFQGAECEECCLACHKKCLETLAIQC) adopts a Phorbol-ester/DAG-type zinc-finger fold. Residues 788 to 1001 (QDFSHAARSA…TLIVHYGLVF (214 aa)) enclose the Rho-GAP domain. Phosphoserine is present on residues serine 976, serine 1054, serine 1057, and serine 1059. Disordered regions lie at residues 1042–1067 (AAEDGCRESRVVSNDSDSDLEEASEL) and 1087–1163 (SEAS…PEFV). Positions 1087-1099 (SEASLEEASGSHS) are enriched in low complexity. Positions 1125 to 1137 (SGFNTNQSNNVLQ) are enriched in polar residues.

It localises to the cytoplasm. The protein localises to the cell projection. The protein resides in the ruffle membrane. In terms of biological role, contains a GTPase activator for the Rho-type GTPases (RhoGAP) domain that would be able to negatively regulate the actin cytoskeleton as well as cell spreading. However, also contains N-terminally a BAR-domin which is able to play an autoinhibitory effect on this RhoGAP activity. The sequence is that of Rho GTPase-activating protein 45 from Pongo abelii (Sumatran orangutan).